The primary structure comprises 269 residues: Glutamate racemase (269 aa).

Residues 13–14 and 45–46 each bind substrate; these read DS and YS. Cysteine 77 functions as the Proton donor/acceptor in the catalytic mechanism. Position 78-79 (78-79) interacts with substrate; sequence NT. The active-site Proton donor/acceptor is the cysteine 188. 189–190 serves as a coordination point for substrate; sequence TH.

The protein belongs to the aspartate/glutamate racemases family.

It catalyses the reaction L-glutamate = D-glutamate. It participates in cell wall biogenesis; peptidoglycan biosynthesis. In terms of biological role, provides the (R)-glutamate required for cell wall biosynthesis. The chain is Glutamate racemase from Pasteurella multocida (strain Pm70).